Reading from the N-terminus, the 294-residue chain is 4-hydroxy-tetrahydrodipicolinate synthase (294 aa).

Position 47 (Thr47) interacts with pyruvate. The Proton donor/acceptor role is filled by Tyr135. The Schiff-base intermediate with substrate role is filled by Lys163. Residue Thr205 participates in pyruvate binding.

The protein belongs to the DapA family. In terms of assembly, homotetramer; dimer of dimers.

Its subcellular location is the cytoplasm. It carries out the reaction L-aspartate 4-semialdehyde + pyruvate = (2S,4S)-4-hydroxy-2,3,4,5-tetrahydrodipicolinate + H2O + H(+). It functions in the pathway amino-acid biosynthesis; L-lysine biosynthesis via DAP pathway; (S)-tetrahydrodipicolinate from L-aspartate: step 3/4. Catalyzes the condensation of (S)-aspartate-beta-semialdehyde [(S)-ASA] and pyruvate to 4-hydroxy-tetrahydrodipicolinate (HTPA). The polypeptide is 4-hydroxy-tetrahydrodipicolinate synthase (Rickettsia montanensis).